The primary structure comprises 102 residues: Spexin prohormone 1 (102 aa).

The first 26 residues, 1–26 (MKDLRTLAAYALALLLLATFVSHSWS), serve as a signal peptide directing secretion. Residues 27–35 (APKGSFQRR) constitute a propeptide that is removed on maturation. Q49 is subject to Glutamine amide. Residues 50 to 102 (GRRFVSEDRNEGDLYDTIRLESRSQNTENLSISKAAAFLLNILQQARDEDEPY) constitute a propeptide that is removed on maturation.

Belongs to the spexin family. As to expression, mainly expressed in the brain and ovary. Detected bilaterally in the adult brainstem. Expressed in neurons in the dorsal habenula (dHb). In the dHb some neurons project into the interpeduncular nucleus (IPN) where expression often overlaps with galr2a and galr2b. Weakly expressed in the liver, intestine, kidney, heart and gill.

Its subcellular location is the secreted. The protein localises to the extracellular space. It localises to the cytoplasmic vesicle. It is found in the secretory vesicle. Plays a role in the regulation of food intake and energy metabolism. May also be involved in suppressing the anxiety response by promoting the expression of serotonin-related genes such as fev, tph2 and slc6a4a. Functionally, acts as a ligand for galanin receptors galr2a and galr2b. Brain administration of the peptide inhibits food consumption and elevates levels of glucose, triacylglycerol and cholesterol in the serum. Likely to control food intake by regulating appetite related genes which includes the negative regulation of the orexigenic factor agrp. By controlling food intake it may act as a satiety factor in energy metabolism. The polypeptide is Spexin prohormone 1 (spx) (Danio rerio (Zebrafish)).